A 130-amino-acid polypeptide reads, in one-letter code: Protein BLT4 (130 aa).

The first 25 residues, 1 to 25, serve as a signal peptide directing secretion; it reads MARTAATKLALVPLVAAMLLVAADA. The tract at residues 80-130 is disordered; the sequence is VPARTTPAGPQASPPGAASASPTRSAPVSTALRSTDRTRAPHISSDRRLVG. Positions 84–110 are enriched in low complexity; sequence TTPAGPQASPPGAASASPTRSAPVSTA. Positions 113–130 are enriched in basic and acidic residues; that stretch reads STDRTRAPHISSDRRLVG.

Belongs to the plant LTP family. As to expression, shoot meristem.

In terms of biological role, possible dehydrative stress responsive protein. Not shown to have lipid transfer activity. The chain is Protein BLT4 (BLT4) from Hordeum vulgare (Barley).